Consider the following 233-residue polypeptide: Tropomyosin (233 aa).

Residues 6 to 222 (FDTVNEKYQE…KERYKAISDE (217 aa)) adopt a coiled-coil conformation. Residues 48-88 (MERSEERLQTATEKLEEASKAADESERNRKVLENLNNASEE) form a disordered region. Residues 51–79 (SEERLQTATEKLEEASKAADESERNRKVL) are compositionally biased toward basic and acidic residues.

This sequence belongs to the tropomyosin family. As to quaternary structure, homodimer.

Functionally, tropomyosin, in association with the troponin complex, plays a central role in the calcium dependent regulation of muscle contraction. The polypeptide is Tropomyosin (Magallana gigas (Pacific oyster)).